A 135-amino-acid chain; its full sequence is uncharacterized protein (135 aa).

The protein belongs to the MG067/MG068/MG395 family.

This is an uncharacterized protein from Mycoplasma pneumoniae (strain ATCC 29342 / M129 / Subtype 1) (Mycoplasmoides pneumoniae).